A 449-amino-acid polypeptide reads, in one-letter code: Glucose-6-phosphate isomerase (449 aa).

Residue Glu291 is the Proton donor of the active site. Residues His312 and Lys426 contribute to the active site.

This sequence belongs to the GPI family.

It is found in the cytoplasm. It carries out the reaction alpha-D-glucose 6-phosphate = beta-D-fructose 6-phosphate. It functions in the pathway carbohydrate biosynthesis; gluconeogenesis. The protein operates within carbohydrate degradation; glycolysis; D-glyceraldehyde 3-phosphate and glycerone phosphate from D-glucose: step 2/4. Functionally, catalyzes the reversible isomerization of glucose-6-phosphate to fructose-6-phosphate. In Pediococcus pentosaceus (strain ATCC 25745 / CCUG 21536 / LMG 10740 / 183-1w), this protein is Glucose-6-phosphate isomerase.